The sequence spans 1154 residues: Serine-aspartate repeat-containing protein E (1154 aa).

A signal peptide spans 1–52; sequence MINRDNKKAITKKGMISNRLNKFSIRKYTVGTASILVGTTLIFGLGNQEAKA. The short motif at 23–34 is the YSIRK-G/S signaling motif element; it reads FSIRKYTVGTAS. A ligand binding A region region spans residues 53–606; it reads AENTSTENAK…GDGTVKPEEK (554 aa). The disordered stretch occupies residues 54-230; it reads ENTSTENAKQ…SKEELKNNPE (177 aa). Over residues 61 to 75 the composition is skewed to basic and acidic residues; that stretch reads AKQDDATTSDNKEVV. The segment covering 77–90 has biased composition (low complexity); sequence ETENNSTTENNSTN. Basic and acidic residues predominate over residues 92-108; that stretch reads IKKETNTDSQPEAKKES. Polar residues predominate over residues 118–129; sequence NNVTATTETKPQ. The segment covering 130 to 145 has biased composition (basic and acidic residues); that stretch reads NIEKENVKPSTDKTAT. The span at 166–178 shows a compositional bias: low complexity; sequence TTKPSTSEPSTSE. Over residues 179 to 212 the composition is skewed to polar residues; sequence IQTKPTTPQESTNIENSQPQPTPSKVDNQVTDAT. A compositionally biased stretch (basic and acidic residues) spans 221–230; that stretch reads SKEELKNNPE. CNA-B domains lie at 607 to 719, 720 to 829, and 830 to 940; these read LYKI…YKEP, KYNL…YKTP, and KYSL…EEDT. The disordered stretch occupies residues 904–1129; it reads VTNTTEDDKD…TGSENNGSNN (226 aa). 2 stretches are compositionally biased toward acidic residues: residues 908 to 918 and 935 to 1093; these read TEDDKDADGGE and YFEE…DSDS. An LPXTG sorting signal motif is present at residues 1117-1121; sequence LPETG. Position 1120 is a pentaglycyl murein peptidoglycan amidated threonine (T1120). Positions 1121-1154 are cleaved as a propeptide — removed by sortase; sequence GSENNGSNNATLFGGLFAALGSLLLFGRRKKQNK.

This sequence belongs to the serine-aspartate repeat-containing protein (SDr) family. As to quaternary structure, interacts with host complement factor H/CFAH (via C-terminus). Interacts with host complement regulator C4BPA.

Its subcellular location is the secreted. It is found in the cell wall. Cell surface-associated calcium-binding protein which plays an important role in adhesion and pathogenesis. Contributes to the resistance to killing by innate immune components in blood and thus attenuates bacterial clearance by interacting with host complement factor H/CFAH and modulating its activity. Also inhibits bacterial opsonization and killing by interacting with host complement regulator C4BPA and thus inhibiting classical complement pathway activation. The protein is Serine-aspartate repeat-containing protein E (sdrE) of Staphylococcus aureus (strain USA300).